The primary structure comprises 147 residues: 3-dehydroquinate dehydratase (147 aa).

Y23 functions as the Proton acceptor in the catalytic mechanism. 3 residues coordinate substrate: N74, H80, and D87. H100 functions as the Proton donor in the catalytic mechanism. Substrate-binding positions include 101-102 (LS) and R111.

This sequence belongs to the type-II 3-dehydroquinase family. Homododecamer.

It catalyses the reaction 3-dehydroquinate = 3-dehydroshikimate + H2O. It functions in the pathway metabolic intermediate biosynthesis; chorismate biosynthesis; chorismate from D-erythrose 4-phosphate and phosphoenolpyruvate: step 3/7. In terms of biological role, catalyzes a trans-dehydration via an enolate intermediate. This Clostridium botulinum (strain Loch Maree / Type A3) protein is 3-dehydroquinate dehydratase.